Here is a 396-residue protein sequence, read N- to C-terminus: Elongation factor Tu 1 (396 aa).

A tr-type G domain is found at K10 to E206. The tract at residues G19–T26 is G1. Position 19-26 (G19–T26) interacts with GTP. T26 serves as a coordination point for Mg(2+). Residues G60–N64 are G2. The G3 stretch occupies residues D81–G84. GTP-binding positions include D81 to H85 and N136 to D139. A G4 region spans residues N136–D139. A G5 region spans residues S174–K176.

Belongs to the TRAFAC class translation factor GTPase superfamily. Classic translation factor GTPase family. EF-Tu/EF-1A subfamily. As to quaternary structure, monomer.

It is found in the cytoplasm. It carries out the reaction GTP + H2O = GDP + phosphate + H(+). Its function is as follows. GTP hydrolase that promotes the GTP-dependent binding of aminoacyl-tRNA to the A-site of ribosomes during protein biosynthesis. The chain is Elongation factor Tu 1 from Methylobacillus flagellatus (strain ATCC 51484 / DSM 6875 / VKM B-1610 / KT).